Consider the following 209-residue polypeptide: Na(+)-translocating NADH-quinone reductase subunit D (209 aa).

5 helical membrane-spanning segments follow: residues 42–62 (VVMT…ISLI), 66–86 (IPNS…VIVV), 95–115 (FEIS…CIVM), 131–151 (FMDG…VGFL), and 178–198 (NGLF…IWAL).

Belongs to the NqrDE/RnfAE family. As to quaternary structure, composed of six subunits; NqrA, NqrB, NqrC, NqrD, NqrE and NqrF.

The protein localises to the cell inner membrane. The catalysed reaction is a ubiquinone + n Na(+)(in) + NADH + H(+) = a ubiquinol + n Na(+)(out) + NAD(+). Its function is as follows. NQR complex catalyzes the reduction of ubiquinone-1 to ubiquinol by two successive reactions, coupled with the transport of Na(+) ions from the cytoplasm to the periplasm. NqrA to NqrE are probably involved in the second step, the conversion of ubisemiquinone to ubiquinol. In Serratia proteamaculans (strain 568), this protein is Na(+)-translocating NADH-quinone reductase subunit D.